A 55-amino-acid polypeptide reads, in one-letter code: UPF0434 protein Erum1340/ERWE_CDS_01300 (55 aa).

Belongs to the UPF0434 family.

The chain is UPF0434 protein Erum1340/ERWE_CDS_01300 from Ehrlichia ruminantium (strain Welgevonden).